Consider the following 90-residue polypeptide: Small ribosomal subunit protein uS15c (90 aa).

This sequence belongs to the universal ribosomal protein uS15 family. Part of the 30S ribosomal subunit.

The protein localises to the plastid. Its subcellular location is the chloroplast. This chain is Small ribosomal subunit protein uS15c (rps15), found in Daucus carota (Wild carrot).